Reading from the N-terminus, the 381-residue chain is Cyclic AMP-AMP-GMP synthase (381 aa).

Residues glutamine 51, serine 53, arginine 56, aspartate 69, aspartate 71, and arginine 109 each contribute to the ATP site. Active-site residues include aspartate 69 and aspartate 71. Mg(2+) contacts are provided by aspartate 69 and aspartate 71. Aspartate 121 is an active-site residue. Mg(2+)-binding residues include aspartate 121 and aspartate 196. Residues aspartate 196, arginine 197, arginine 204, threonine 205, glutamine 210, lysine 233, and tyrosine 250 each coordinate ATP. The Mg(2+) site is built by asparagine 258 and leucine 260. 2 residues coordinate ATP: valine 304 and arginine 307. The segment at 348-381 is disordered; it reads GSKFPLPGPQGGDRNGGFTTPSKPAEPQKTGRFA.

The protein belongs to the CD-NTase family. D02 subfamily. As to quaternary structure, monomer. Crystallizes as a Cap2 homodimer bound on each side by a CdnD monomer. The cofactor is Mg(2+). Post-translationally, in bacteria expressing cap4-dncV-cap2-cap3, this protein is conjugated to a number of other proteins by Cap2, probably via this protein's C-terminal Ala residue. More conjugated DncV is found in the absence of Cap3.

It catalyses the reaction GTP + 2 ATP = 3',3',3'-cAAG + 3 diphosphate. Primed for activation by Cap2 which conjugates it to cellular proteins; activation is target protein-specific (green fluorescent protein does not activate the enzyme), but which protein(s) activate it is unclear. Its function is as follows. Cyclic nucleotide synthase (second messenger synthase) of a CBASS antivirus system. CBASS (cyclic oligonucleotide-based antiphage signaling system) provides immunity against bacteriophages. The CD-NTase protein (CdnD, this protein) synthesizes cyclic nucleotides in response to infection; these serve as specific second messenger signals. The signals activate a diverse range of effectors, leading to bacterial cell death and thus abortive phage infection. A type II-C(AAG) CBASS system. Functionally, cyclic trinucleotide synthase that catalyzes the synthesis of 3',3',3'-cyclic AMP-AMP-GMP (cAAG) as the major product, a second messenger for cell signal transduction. Uses ATP as the first donor nucleotide, followed by GTP. In terms of biological role, protects E.coli against phage T2 infection. When the cdnD-cap2-cap3-cap4 operon is introduced in E.coli there is a more than 10(3) decrease in the efficiency of T2 plaque formation. The operon does not protect against phage T5 and only about 10-fold against T7. Expression of cdnD-cap4 alone protects E.coli against phage T2 infection. In Enterobacter hormaechei subsp. hoffmannii (strain UCI 50), this protein is Cyclic AMP-AMP-GMP synthase.